We begin with the raw amino-acid sequence, 635 residues long: Chaperone protein DnaK (635 aa).

Thr198 is modified (phosphothreonine; by autocatalysis). A disordered region spans residues 606-635; sequence QATAASPGAEAPKADDDVVDAEFSEVDENK. Acidic residues predominate over residues 622–635; that stretch reads DVVDAEFSEVDENK.

It belongs to the heat shock protein 70 family.

Its function is as follows. Acts as a chaperone. This chain is Chaperone protein DnaK, found in Novosphingobium aromaticivorans (strain ATCC 700278 / DSM 12444 / CCUG 56034 / CIP 105152 / NBRC 16084 / F199).